The chain runs to 184 residues: Photosystem I assembly protein Ycf4 (184 aa).

Helical transmembrane passes span 22-42 (FCWA…GISS) and 64-84 (IVMS…WSTI).

It belongs to the Ycf4 family.

The protein resides in the plastid. The protein localises to the chloroplast thylakoid membrane. Seems to be required for the assembly of the photosystem I complex. The protein is Photosystem I assembly protein Ycf4 of Piper cenocladum (Ant piper).